Reading from the N-terminus, the 526-residue chain is MHDKIVVLDFGSQYTQLIARRVRETGVYSEIRPCTVEADAIDALNPSGVILSGGPCSVYDEAGPALDPALLELERPDGTPVPLLGICYGLQAMAHQFGGEVARADRREFGRAQLQVPPDGQEKSLLFEGVPSGSTVWMSHSDHLTDLPDGYEVIARTDNAPVAAVRDTDGPYYGVQFHPEVVHTDYGRQILENFAHAICGCSGDWTPASFVEEQTETIRDRVGDRHVILGLSGGVDSSVAAALLQRALGDQLHCIFVNNGLLRKGEWNQVQDTFRGHFEMDLRTTDATDRFLERLDGVTDPEEKRTIVGNTFIEVFEEQTEAIAADLGHRPTYLAQGTLYPDLIESVSFKGPSVTIKTHHNVGGLPEELDFDLIEPFRELFKDEVREIGRLLDVPDPIVGRHPFPGPGLAIRILGQITRERLALLREADAIFIEELRANDLYDEVWQAFAVLLPVQAVGVMGDERTYENVCALRAVTSVDGMTADWAHLPHDFLGHVSNRIVNEVPGINRIVYDVSSKPPATIEWE.

In terms of domain architecture, Glutamine amidotransferase type-1 spans 4–204 (KIVVLDFGSQ…AHAICGCSGD (201 aa)). The active-site Nucleophile is the Cys87. Active-site residues include His178 and Glu180. The GMPS ATP-PPase domain maps to 205–401 (WTPASFVEEQ…LDVPDPIVGR (197 aa)). Residue 232-238 (SGGVDSS) coordinates ATP.

As to quaternary structure, homodimer.

The catalysed reaction is XMP + L-glutamine + ATP + H2O = GMP + L-glutamate + AMP + diphosphate + 2 H(+). Its pathway is purine metabolism; GMP biosynthesis; GMP from XMP (L-Gln route): step 1/1. Its function is as follows. Catalyzes the synthesis of GMP from XMP. This is GMP synthase [glutamine-hydrolyzing] from Salinibacter ruber (strain DSM 13855 / M31).